A 78-amino-acid polypeptide reads, in one-letter code: Mandibular organ-inhibiting hormone 1 (78 aa).

Disulfide bonds link C7–C44, C24–C40, and C27–C53.

This sequence belongs to the arthropod CHH/MIH/GIH/VIH hormone family. In terms of tissue distribution, produced by the medulla terminalis X-organ in the eyestalks and transported to the sinus gland where it is stored and released.

The protein localises to the secreted. Its function is as follows. Represses the synthesis of methyl farnesoate, the precursor of insect juvenile hormone III in the mandibular organ. In Cancer pagurus (Rock crab), this protein is Mandibular organ-inhibiting hormone 1.